Consider the following 213-residue polypeptide: StAR-related lipid transfer protein 5 (213 aa).

Positions 1–213 (MDPALAAQMS…LQKAVKQFHE (213 aa)) constitute an START domain.

May be involved in the intracellular transport of sterols or other lipids. May bind cholesterol or other sterols. In Pongo abelii (Sumatran orangutan), this protein is StAR-related lipid transfer protein 5 (STARD5).